Reading from the N-terminus, the 276-residue chain is Acyl-[acyl-carrier-protein]--UDP-N-acetylglucosamine O-acyltransferase (276 aa).

It belongs to the transferase hexapeptide repeat family. LpxA subfamily. As to quaternary structure, homotrimer.

It is found in the cytoplasm. It carries out the reaction a (3R)-hydroxyacyl-[ACP] + UDP-N-acetyl-alpha-D-glucosamine = a UDP-3-O-[(3R)-3-hydroxyacyl]-N-acetyl-alpha-D-glucosamine + holo-[ACP]. Its pathway is glycolipid biosynthesis; lipid IV(A) biosynthesis; lipid IV(A) from (3R)-3-hydroxytetradecanoyl-[acyl-carrier-protein] and UDP-N-acetyl-alpha-D-glucosamine: step 1/6. In terms of biological role, involved in the biosynthesis of lipid A, a phosphorylated glycolipid that anchors the lipopolysaccharide to the outer membrane of the cell. This is Acyl-[acyl-carrier-protein]--UDP-N-acetylglucosamine O-acyltransferase from Synechocystis sp. (strain ATCC 27184 / PCC 6803 / Kazusa).